A 111-amino-acid chain; its full sequence is ATP-dependent Clp protease adapter protein ClpS (111 aa).

This sequence belongs to the ClpS family. Binds to the N-terminal domain of the chaperone ClpA.

Functionally, involved in the modulation of the specificity of the ClpAP-mediated ATP-dependent protein degradation. The protein is ATP-dependent Clp protease adapter protein ClpS of Legionella pneumophila (strain Paris).